Here is an 88-residue protein sequence, read N- to C-terminus: Small ribosomal subunit protein bS16 (88 aa).

This sequence belongs to the bacterial ribosomal protein bS16 family.

The polypeptide is Small ribosomal subunit protein bS16 (Anaeromyxobacter dehalogenans (strain 2CP-1 / ATCC BAA-258)).